Consider the following 472-residue polypeptide: Envelope glycoprotein O (472 aa).

Residues 1–31 (MGKKEMIMVKGIPKIMLLISITFLLLSLINC) form the signal peptide. N-linked (GlcNAc...) asparagine; by host glycosylation is found at Asn-109, Asn-136, Asn-163, Asn-168, Asn-177, Asn-225, Asn-248, Asn-294, Asn-298, Asn-356, Asn-391, Asn-398, Asn-405, Asn-439, and Asn-460.

It belongs to the herpesviridae U47 family. Forms the envelope trimer complex composed of gH, gL, and gO. The trimer interacts with host PDGFRA. In terms of processing, N-glycosylated. The N-terminus is blocked.

It is found in the virion membrane. Its function is as follows. Plays a role in viral entry into host cells. Forms a trimeric complex at the surface of the viral envelope together with gH and gL. This complex is required for entry in host fibroblasts. Mechanistically, engages host receptor(s) including PDGFRA to mediate infection. This chain is Envelope glycoprotein O (UL74), found in Human cytomegalovirus (strain Merlin) (HHV-5).